Here is a 336-residue protein sequence, read N- to C-terminus: Peroxidase 11 (336 aa).

An N-terminal signal peptide occupies residues 1–20; sequence MMRLLFVFFMVHTIFIPCFS. Disulfide bonds link C39–C119, C72–C77, C125–C331, and C204–C236. The active-site Proton acceptor is H70. Ca(2+)-binding residues include D71, V74, G76, D78, and S80. P167 lines the substrate pocket. H197 is a heme b binding site. Residue T198 participates in Ca(2+) binding. N-linked (GlcNAc...) asparagine glycosylation occurs at N246. Residues D251, T254, and D259 each contribute to the Ca(2+) site.

The protein belongs to the peroxidase family. Classical plant (class III) peroxidase subfamily. Heme b is required as a cofactor. Requires Ca(2+) as cofactor. As to expression, expressed in roots and stems.

It localises to the secreted. The catalysed reaction is 2 a phenolic donor + H2O2 = 2 a phenolic radical donor + 2 H2O. Removal of H(2)O(2), oxidation of toxic reductants, biosynthesis and degradation of lignin, suberization, auxin catabolism, response to environmental stresses such as wounding, pathogen attack and oxidative stress. These functions might be dependent on each isozyme/isoform in each plant tissue. The chain is Peroxidase 11 (PER11) from Arabidopsis thaliana (Mouse-ear cress).